The chain runs to 145 residues: MLGKILLLNGPNLNMLGKREPDIYGHDTLEDVVALATAEAAKHGLEVEALQSNHEGELIDALHNARGTHIGCVINPGGLTHTSVALLDAVKASELPTVEVHISNPHAREEFRHHSYISLAAVSVIAGAGIQGYRFAVDILANLKK.

The active-site Proton acceptor is tyrosine 24. The substrate site is built by asparagine 75, histidine 81, and aspartate 88. Catalysis depends on histidine 101, which acts as the Proton donor. Substrate contacts are provided by residues 102–103 and arginine 112; that span reads IS.

Belongs to the type-II 3-dehydroquinase family. As to quaternary structure, homododecamer.

It carries out the reaction 3-dehydroquinate = 3-dehydroshikimate + H2O. It functions in the pathway metabolic intermediate biosynthesis; chorismate biosynthesis; chorismate from D-erythrose 4-phosphate and phosphoenolpyruvate: step 3/7. Its function is as follows. Catalyzes a trans-dehydration via an enolate intermediate. This Corynebacterium glutamicum (strain R) protein is 3-dehydroquinate dehydratase.